A 722-amino-acid polypeptide reads, in one-letter code: 1,4-alpha-glucan branching enzyme GlgB (722 aa).

Catalysis depends on Asp-401, which acts as the Nucleophile. Glu-454 acts as the Proton donor in catalysis.

Belongs to the glycosyl hydrolase 13 family. GlgB subfamily. Monomer.

The catalysed reaction is Transfers a segment of a (1-&gt;4)-alpha-D-glucan chain to a primary hydroxy group in a similar glucan chain.. It functions in the pathway glycan biosynthesis; glycogen biosynthesis. Functionally, catalyzes the formation of the alpha-1,6-glucosidic linkages in glycogen by scission of a 1,4-alpha-linked oligosaccharide from growing alpha-1,4-glucan chains and the subsequent attachment of the oligosaccharide to the alpha-1,6 position. The polypeptide is 1,4-alpha-glucan branching enzyme GlgB (Rubrobacter xylanophilus (strain DSM 9941 / JCM 11954 / NBRC 16129 / PRD-1)).